We begin with the raw amino-acid sequence, 431 residues long: Nuclear envelope integral membrane protein 1 (431 aa).

Residues 1–29 form the signal peptide; sequence MAGEVEGEGCRVSWGVLVALLLLPLPSLC. 5 consecutive transmembrane segments (helical) span residues 151–171, 175–195, 206–226, 236–256, and 266–286; these read PRLF…DTLS, IFYY…ILVF, PFVA…QLVF, YWQY…AFCY, and SINI…YISV. Residues 176 to 287 are a; required for its colocalization with lamins at the nuclear envelope; the sequence is FYYSTGITVG…GLLLMYISVQ (112 aa). The Nuclear localization signal motif lies at 317 to 325; that stretch reads RKIKLKRGK. A b; required for interaction with ran region spans residues 326–395; sequence PSPPRLLTEE…LTPNEVSVHE (70 aa). The segment at 326-431 is interaction with banf1-a and banf1-b; the sequence is PSPPRLLTEE…IEPVLYQDLR (106 aa). The BAF-binding site (BBS); essential for interaction with banf1-a, banf1-b and ran stretch occupies residues 368–375; the sequence is SRIQSPKR.

Belongs to the NEMP family. As to quaternary structure, homooligomer. Interacts with banf1-a and banf1-b. Interacts with ran-gtp. In terms of processing, phosphorylated.

It is found in the nucleus inner membrane. Its subcellular location is the nucleus envelope. In concert with ran, required for proper eye development. May be involved in the expression of early eye marker genes. Contributes to nuclear envelope stiffness in germ cells. Required for fertility. Essential for normal erythropoiesis. Required for efficient nuclear envelope opening and enucleation during the late stages of erythroblast maturation. This chain is Nuclear envelope integral membrane protein 1 (nemp1), found in Xenopus tropicalis (Western clawed frog).